A 301-amino-acid polypeptide reads, in one-letter code: GTPase Era (301 aa).

In terms of domain architecture, Era-type G spans 11–180; the sequence is RSGIITLVGR…KDVFFENCLN (170 aa). A G1 region spans residues 19–26; that stretch reads GRPNVGKS. 19 to 26 lines the GTP pocket; it reads GRPNVGKS. The G2 stretch occupies residues 45 to 49; the sequence is QTTRR. The interval 66 to 69 is G3; that stretch reads DTPG. GTP contacts are provided by residues 66-70 and 129-132; these read DTPGI and TKID. Positions 129–132 are G4; sequence TKID. A G5 region spans residues 159 to 161; it reads VSA. Residues 210–286 form the KH type-2 domain; that stretch reads LEQEIPHSLL…YLRLIVKVVK (77 aa).

It belongs to the TRAFAC class TrmE-Era-EngA-EngB-Septin-like GTPase superfamily. Era GTPase family. In terms of assembly, monomer.

It localises to the cytoplasm. It is found in the cell membrane. In terms of biological role, an essential GTPase that binds both GDP and GTP, with rapid nucleotide exchange. Plays a role in 16S rRNA processing and 30S ribosomal subunit biogenesis and possibly also in cell cycle regulation and energy metabolism. The protein is GTPase Era of Tropheryma whipplei (strain TW08/27) (Whipple's bacillus).